The chain runs to 235 residues: Urease accessory protein UreF (235 aa).

It belongs to the UreF family. UreD, UreF and UreG form a complex that acts as a GTP-hydrolysis-dependent molecular chaperone, activating the urease apoprotein by helping to assemble the nickel containing metallocenter of UreC. The UreE protein probably delivers the nickel.

Its subcellular location is the cytoplasm. Required for maturation of urease via the functional incorporation of the urease nickel metallocenter. This is Urease accessory protein UreF from Psychrobacter cryohalolentis (strain ATCC BAA-1226 / DSM 17306 / VKM B-2378 / K5).